The chain runs to 115 residues: Ribonuclease P protein component (115 aa).

The protein belongs to the RnpA family. In terms of assembly, consists of a catalytic RNA component (M1 or rnpB) and a protein subunit.

It carries out the reaction Endonucleolytic cleavage of RNA, removing 5'-extranucleotides from tRNA precursor.. In terms of biological role, RNaseP catalyzes the removal of the 5'-leader sequence from pre-tRNA to produce the mature 5'-terminus. It can also cleave other RNA substrates such as 4.5S RNA. The protein component plays an auxiliary but essential role in vivo by binding to the 5'-leader sequence and broadening the substrate specificity of the ribozyme. The chain is Ribonuclease P protein component from Buchnera aphidicola subsp. Acyrthosiphon pisum (strain APS) (Acyrthosiphon pisum symbiotic bacterium).